We begin with the raw amino-acid sequence, 342 residues long: S-adenosylmethionine:tRNA ribosyltransferase-isomerase (342 aa).

Belongs to the QueA family. Monomer.

It is found in the cytoplasm. It catalyses the reaction 7-aminomethyl-7-carbaguanosine(34) in tRNA + S-adenosyl-L-methionine = epoxyqueuosine(34) in tRNA + adenine + L-methionine + 2 H(+). It functions in the pathway tRNA modification; tRNA-queuosine biosynthesis. Transfers and isomerizes the ribose moiety from AdoMet to the 7-aminomethyl group of 7-deazaguanine (preQ1-tRNA) to give epoxyqueuosine (oQ-tRNA). This is S-adenosylmethionine:tRNA ribosyltransferase-isomerase from Sulfurimonas denitrificans (strain ATCC 33889 / DSM 1251) (Thiomicrospira denitrificans (strain ATCC 33889 / DSM 1251)).